We begin with the raw amino-acid sequence, 311 residues long: tRNA-cytidine(32) 2-sulfurtransferase (311 aa).

A PP-loop motif motif is present at residues 47-52 (SGGKDS). Residues C122, C125, and C213 each contribute to the [4Fe-4S] cluster site.

It belongs to the TtcA family. In terms of assembly, homodimer. The cofactor is Mg(2+). [4Fe-4S] cluster serves as cofactor.

It localises to the cytoplasm. The enzyme catalyses cytidine(32) in tRNA + S-sulfanyl-L-cysteinyl-[cysteine desulfurase] + AH2 + ATP = 2-thiocytidine(32) in tRNA + L-cysteinyl-[cysteine desulfurase] + A + AMP + diphosphate + H(+). It functions in the pathway tRNA modification. Functionally, catalyzes the ATP-dependent 2-thiolation of cytidine in position 32 of tRNA, to form 2-thiocytidine (s(2)C32). The sulfur atoms are provided by the cysteine/cysteine desulfurase (IscS) system. The polypeptide is tRNA-cytidine(32) 2-sulfurtransferase (Escherichia coli O45:K1 (strain S88 / ExPEC)).